We begin with the raw amino-acid sequence, 641 residues long: 1-deoxy-D-xylulose-5-phosphate synthase (641 aa).

Thiamine diphosphate is bound by residues His71 and 112-114; that span reads SHA. Mg(2+) is bound at residue Asp144. Thiamine diphosphate-binding positions include 145 to 146, Asn174, Tyr285, and Glu366; that span reads GA. Asn174 lines the Mg(2+) pocket.

The protein belongs to the transketolase family. DXPS subfamily. Homodimer. Mg(2+) serves as cofactor. The cofactor is thiamine diphosphate.

It carries out the reaction D-glyceraldehyde 3-phosphate + pyruvate + H(+) = 1-deoxy-D-xylulose 5-phosphate + CO2. It functions in the pathway metabolic intermediate biosynthesis; 1-deoxy-D-xylulose 5-phosphate biosynthesis; 1-deoxy-D-xylulose 5-phosphate from D-glyceraldehyde 3-phosphate and pyruvate: step 1/1. In terms of biological role, catalyzes the acyloin condensation reaction between C atoms 2 and 3 of pyruvate and glyceraldehyde 3-phosphate to yield 1-deoxy-D-xylulose-5-phosphate (DXP). The chain is 1-deoxy-D-xylulose-5-phosphate synthase from Mycobacteroides abscessus (strain ATCC 19977 / DSM 44196 / CCUG 20993 / CIP 104536 / JCM 13569 / NCTC 13031 / TMC 1543 / L948) (Mycobacterium abscessus).